The sequence spans 798 residues: Peregrinol diphosphate synthase TPS1, chloroplastic (798 aa).

Residues 1–25 (MASLSTPNINNTTFVNSKTQLPAVK) constitute a chloroplast transit peptide. Lys-243 serves as a coordination point for substrate. Mg(2+)-binding residues include Asp-377 and Asp-379. The short motif at 377 to 380 (DLDD) is the DXDD motif element. A substrate-binding site is contributed by Lys-463.

This sequence belongs to the terpene synthase family. Requires Mg(2+) as cofactor. In terms of tissue distribution, mostly expressed in trichomes of leaves and fruits.

It is found in the plastid. The protein localises to the chloroplast. The enzyme catalyses peregrinol diphosphate = (2E,6E,10E)-geranylgeranyl diphosphate + H2O. It participates in secondary metabolite biosynthesis; terpenoid biosynthesis. Its function is as follows. Involved in the biosynthesis of labdane-type diterpenoid including cleroda-dienols, and peregrinol lactones and furan derivatives, dopaminergic diterpenoids that can bind to dopamine receptors in the human pituitary gland, have probably ability to lower prolactin levels, and are used to treat menstrual cycle disorders (e.g. premenstrual syndrome and mastodynia). Terpene synthase that produces peregrinol diphosphate from geranylgeranyl diphosphate (GGPP). This Vitex agnus-castus (Chaste tree) protein is Peregrinol diphosphate synthase TPS1, chloroplastic.